The following is a 141-amino-acid chain: Hemoglobin subunit alpha-2 (141 aa).

Residues 1–141 form the Globin domain; sequence VLSSQDKANV…VKHVLTSKYR (141 aa). Histidine 58 lines the O2 pocket. Histidine 87 is a binding site for heme b.

This sequence belongs to the globin family. In terms of assembly, minor hemoglobin is a heterotetramer of two alpha-2 chains and two beta-2 chains. As to expression, red blood cells.

Its function is as follows. Involved in oxygen transport from the lung to the various peripheral tissues. The sequence is that of Hemoglobin subunit alpha-2 from Triturus cristatus (Great crested newt).